The following is a 65-amino-acid chain: Small ribosomal subunit protein bS21 (65 aa).

Belongs to the bacterial ribosomal protein bS21 family.

The protein is Small ribosomal subunit protein bS21 of Geotalea daltonii (strain DSM 22248 / JCM 15807 / FRC-32) (Geobacter daltonii).